Here is a 457-residue protein sequence, read N- to C-terminus: Adenylosuccinate synthetase isozyme 1 (457 aa).

The tract at residues 1 to 21 (MSGTRASNDRPPGAGGVKRGR) is disordered. GTP is bound by residues 42–48 (GDEGKGK) and 70–72 (GHT). The Proton acceptor role is filled by Asp43. Mg(2+) contacts are provided by Asp43 and Gly70. Residue Asp43 coordinates substrate. IMP is bound by residues 43 to 46 (DEGK), 68 to 71 (NAGH), Thr163, Arg177, Asn256, Thr271, and Arg335. His71 functions as the Proton donor in the catalytic mechanism. 331–337 (VTTGRKR) lines the substrate pocket. GTP contacts are provided by residues Arg337, 363–365 (KLD), and 445–448 (GVGK).

It belongs to the adenylosuccinate synthetase family. Homodimer. Mg(2+) is required as a cofactor. In terms of tissue distribution, predominantly expressed in skeletal muscle and heart, as well as in several hematopoietic cell lines and solid tumors.

The protein resides in the cytoplasm. The enzyme catalyses IMP + L-aspartate + GTP = N(6)-(1,2-dicarboxyethyl)-AMP + GDP + phosphate + 2 H(+). It participates in purine metabolism; AMP biosynthesis via de novo pathway; AMP from IMP: step 1/2. Functionally, component of the purine nucleotide cycle (PNC), which interconverts IMP and AMP to regulate the nucleotide levels in various tissues, and which contributes to glycolysis and ammoniagenesis. Catalyzes the first committed step in the biosynthesis of AMP from IMP. This Homo sapiens (Human) protein is Adenylosuccinate synthetase isozyme 1.